The chain runs to 561 residues: Putative transport protein YbjL (561 aa).

A run of 5 helical transmembrane segments spans residues 8–28 (LLNG…LCLG), 32–52 (LGSV…LLGQ), 66–86 (FMLF…SIFF), 94–114 (MLAL…GKLF), and 158–178 (NLSL…IVGA). 2 consecutive RCK C-terminal domains span residues 200-288 (RGLD…SFRN) and 292-373 (VFDR…RIGF). 5 consecutive transmembrane segments (helical) span residues 383–403 (LLAF…TFQF), 406–426 (FSFG…LGFL), 447–467 (FGLM…ISNG), 475–495 (MLIA…LFGA), and 540–560 (AIAN…WPGL).

This sequence belongs to the AAE transporter (TC 2.A.81) family. YbjL subfamily.

The protein localises to the cell membrane. The polypeptide is Putative transport protein YbjL (Salmonella typhi).